The primary structure comprises 468 residues: Argininosuccinate lyase (468 aa).

2-(N(omega)-L-arginino)succinate-binding residues include Ser33, Asn121, and Thr166. Catalysis depends on His167, which acts as the Proton acceptor. Ser288 functions as the Proton donor in the catalytic mechanism. 4 residues coordinate 2-(N(omega)-L-arginino)succinate: Asn296, Tyr328, Gln333, and Lys336.

It belongs to the lyase 1 family. Argininosuccinate lyase subfamily. Homotetramer.

The enzyme catalyses 2-(N(omega)-L-arginino)succinate = fumarate + L-arginine. It participates in amino-acid biosynthesis; L-arginine biosynthesis; L-arginine from L-ornithine and carbamoyl phosphate: step 3/3. The chain is Argininosuccinate lyase (ARG4) from Candida albicans (Yeast).